The chain runs to 63 residues: Keratin-associated protein 19-7 (63 aa).

The protein belongs to the KRTAP type 19 family. As to quaternary structure, interacts with hair keratins.

Functionally, in the hair cortex, hair keratin intermediate filaments are embedded in an interfilamentous matrix, consisting of hair keratin-associated proteins (KRTAP), which are essential for the formation of a rigid and resistant hair shaft through their extensive disulfide bond cross-linking with abundant cysteine residues of hair keratins. The matrix proteins include the high-sulfur and high-glycine-tyrosine keratins. The protein is Keratin-associated protein 19-7 (KRTAP19-7) of Homo sapiens (Human).